The chain runs to 723 residues: MPLFFRKRKPSEEARKRLEYQMCLAKEAGADDILDISKCELSEIPFGAFATCKVLQKKVLIVHTNHLTSLLPKSCSLLSLATIKVLDLHDNQLTALPDDLGQLTALQVLNVERNQLMQLPRSIGNLTQLQTLNVKDNKLKELPDTVGELRSLRTLNISGNEIQRLPQMLAHVRTLEMLSLDASAMVYPPREVCGAGTAAILQFLCKESGLEYYPPSQYLLPILEQDGIENSRDSPDGPTDRFSREELEWQNRFSDYEKRKEQKMLEKLEFERRLELGQREHTQLLQQSSSQKDEILQTVKEEQSRLEQGLSEHQRHLNAERQRLQEQLKQTEQNISSRIQKLLQDNQRQKKSSEILKSLENERIRMEQLMSITQEETESLRRRDVASAMQQMLTESCKNRLIQMAYESQRQNLVQQACSSMAEMDERFQQILSWQQMDQNKAISQILQESAMQKAAFEALQVKKDLMHRQIRSQIKLIETELLQLTQLELKRKSLDTESLQEMISEQRWALSSLLQQLLKEKQQREEELREILTELEAKSETRQENYWLIQYQRLLNQKPLSLKLQEEGMERQLVALLEELSAEHYLPIFAHHRLSLDLLSQMSPGDLAKVGVSEAGLQHEILRRVQELLDAARIQPELKPPMGEVVTPTAPQEPPESVRPSAPPAELEVQASECVVCLEREAQMIFLNCGHVCCCQQCCQPLRTCPLCRQDIAQRLRIYHSS.

6 LRR repeats span residues 30-51 (ADDI…AFAT), 56-77 (QKKV…SCSL), 82-103 (TIKV…LGQL), 105-127 (ALQV…GNLT), 128-149 (QLQT…VGEL), and 151-172 (SLRT…LAHV). At serine 234 the chain carries Phosphoserine. 2 coiled-coil regions span residues 254–380 (SDYE…TESL) and 510–562 (ALSS…KPLS). The tract at residues 282-314 (TQLLQQSSSQKDEILQTVKEEQSRLEQGLSEHQ) is disordered. Basic and acidic residues predominate over residues 291-314 (QKDEILQTVKEEQSRLEQGLSEHQ). Residues 569 to 632 (GMERQLVALL…LRRVQELLDA (64 aa)) enclose the SAM domain. Serine 604 bears the Phosphoserine mark. Residues 642-665 (PMGEVVTPTAPQEPPESVRPSAPP) form a disordered region. 2 short sequence motifs (PTAP motif) span residues 649 to 652 (PTAP) and 661 to 664 (PSAP). An RING-type zinc finger spans residues 675 to 710 (CVVCLEREAQMIFLNCGHVCCCQQCCQPLRTCPLCR).

As to quaternary structure, interacts with TSG101. Interacts with PHF23. Interacts with FUS. Ubiquitination promoted by PHF23 leads to proteasomal degradation. Highly expressed in adult spinal cord motoneurons as well as in fetal spinal cord and muscle tissue.

The protein localises to the cytoplasm. The catalysed reaction is S-ubiquitinyl-[E2 ubiquitin-conjugating enzyme]-L-cysteine + [acceptor protein]-L-lysine = [E2 ubiquitin-conjugating enzyme]-L-cysteine + N(6)-ubiquitinyl-[acceptor protein]-L-lysine.. Its pathway is protein modification; protein ubiquitination. Functionally, E3 ubiquitin-protein ligase that mediates monoubiquitination of TSG101 at multiple sites, leading to inactivate the ability of TSG101 to sort endocytic (EGF receptors) and exocytic (HIV-1 viral proteins) cargos. Bacterial recognition protein that defends the cytoplasm from invasive pathogens. Localizes to several intracellular bacterial pathogens and generates the bacteria-associated ubiquitin signal leading to autophagy-mediated intracellular bacteria degradation (xenophagy). This Homo sapiens (Human) protein is E3 ubiquitin-protein ligase LRSAM1.